The sequence spans 150 residues: 3-hydroxyacyl-[acyl-carrier-protein] dehydratase FabZ (150 aa).

Histidine 51 is a catalytic residue.

Belongs to the thioester dehydratase family. FabZ subfamily.

It is found in the cytoplasm. It carries out the reaction a (3R)-hydroxyacyl-[ACP] = a (2E)-enoyl-[ACP] + H2O. Involved in unsaturated fatty acids biosynthesis. Catalyzes the dehydration of short chain beta-hydroxyacyl-ACPs and long chain saturated and unsaturated beta-hydroxyacyl-ACPs. The polypeptide is 3-hydroxyacyl-[acyl-carrier-protein] dehydratase FabZ (Legionella pneumophila (strain Paris)).